The sequence spans 119 residues: uncharacterized protein (119 aa).

Residues leucine 74–isoleucine 91 form a helical membrane-spanning segment.

The protein localises to the membrane. This is an uncharacterized protein from Schizosaccharomyces pombe (strain 972 / ATCC 24843) (Fission yeast).